We begin with the raw amino-acid sequence, 1069 residues long: Enteropeptidase (1069 aa).

The Cytoplasmic segment spans residues 1–18 (MKSSRDEAVGHHSISSFE). The helical; Signal-anchor for type II membrane protein transmembrane segment at 19-47 (VMLSALFIMLMVFSIGLIAVSWLAVKESE) threads the bilayer. The Extracellular segment spans residues 48–1069 (GDAALGKSHE…FIEWIHSFLH (1022 aa)). Residues 54–169 (KSHEVRGTFK…NSIDITASLS (116 aa)) form the SEA domain. Residues Asn147, Asn197, and Asn212 are each glycosylated (N-linked (GlcNAc...) asparagine). The LDL-receptor class A 1 domain occupies 227–268 (IECQPGSRPCAHAWNCVATDLFCDGEVNCPDGSDEDTGLCAT). 4 disulfides stabilise this stretch: Cys229–Cys242, Cys236–Cys255, Cys249–Cys266, and Cys270–Cys298. The CUB 1 domain maps to 270-379 (CDGRFLLTGD…IGFNATYSTF (110 aa)). Asn373, Asn380, Asn433, Asn515, Asn579, and Asn675 each carry an N-linked (GlcNAc...) asparagine glycan. Residues 387–549 (YEKIDCTFDD…ISLTNGICSQ (163 aa)) enclose the MAM domain. The cysteines at positions 569 and 597 are disulfide-linked. The CUB 2 domain maps to 569–679 (CGGPFELWEP…KGFKANFTSG (111 aa)). Residues 686–724 (EPCQDDEFQCKDGNCIPLGNLCDSYPHCRDGSDEASCVR) enclose the LDL-receptor class A 2 domain. Disulfide bonds link Cys688–Cys700, Cys695–Cys713, and Cys707–Cys722. One can recognise an SRCR domain in the interval 723 to 816 (VRFLNGTRSN…LILLQCNHKS (94 aa)). N-linked (GlcNAc...) asparagine glycans are attached at residues Asn727, Asn751, Asn770, and Asn791. Cystine bridges form between Cys802–Cys812, Cys817–Cys945, Cys859–Cys875, Cys959–Cys1027, Cys991–Cys1006, and Cys1017–Cys1045. A Peptidase S1 domain is found at 830–1069 (IVGGSDAQAG…FIEWIHSFLH (240 aa)). Residue His874 is the Charge relay system of the active site. A glycan (N-linked (GlcNAc...) asparagine) is linked at Asn897. The Charge relay system role is filled by Asp925. N-linked (GlcNAc...) asparagine glycosylation is found at Asn936 and Asn999. Ser1021 functions as the Charge relay system in the catalytic mechanism.

It belongs to the peptidase S1 family. As to quaternary structure, heterodimer of a catalytic (light) chain and a multidomain (heavy) chain linked by a disulfide bond. Post-translationally, the chains are derived from a single precursor that is cleaved by a trypsin-like protease.

The protein resides in the membrane. The enzyme catalyses Activation of trypsinogen by selective cleavage of 6-Lys-|-Ile-7 bond.. Functionally, responsible for initiating activation of pancreatic proteolytic proenzymes (trypsin, chymotrypsin and carboxypeptidase A). It catalyzes the conversion of trypsinogen to trypsin which in turn activates other proenzymes including chymotrypsinogen, procarboxypeptidases, and proelastases. The chain is Enteropeptidase (Tmprss15) from Mus musculus (Mouse).